Consider the following 242-residue polypeptide: ATP synthase subunit a (242 aa).

6 helical membrane-spanning segments follow: residues 29-49, 84-104, 114-134, 140-160, 189-209, and 210-230; these read SAAY…LAFS, FVPV…FGMI, IIIT…VGFV, FLSL…MIII, VIAS…IPLM, and VILI…FTIL.

The protein belongs to the ATPase A chain family. F-type ATPases have 2 components, CF(1) - the catalytic core - and CF(0) - the membrane proton channel. CF(1) has five subunits: alpha(3), beta(3), gamma(1), delta(1), epsilon(1). CF(0) has three main subunits: a(1), b(2) and c(9-12). The alpha and beta chains form an alternating ring which encloses part of the gamma chain. CF(1) is attached to CF(0) by a central stalk formed by the gamma and epsilon chains, while a peripheral stalk is formed by the delta and b chains.

It localises to the cell inner membrane. Its function is as follows. Key component of the proton channel; it plays a direct role in the translocation of protons across the membrane. In Rickettsia bellii (strain RML369-C), this protein is ATP synthase subunit a.